The chain runs to 613 residues: Metacaspase-1 (613 aa).

Active-site residues include histidine 404 and cysteine 460.

The protein belongs to the peptidase C14B family. As to quaternary structure, monomer.

With respect to regulation, activated by Ca(2+). Functionally, cysteine protease that cleaves specifically after arginine or lysine residues. May play a role in apoptosis. The polypeptide is Metacaspase-1 (Plasmodium falciparum (isolate 3D7)).